Consider the following 385-residue polypeptide: Probable tRNA sulfurtransferase (385 aa).

The THUMP domain occupies 57-160; the sequence is DGVIERVKKV…RGNAYVFTDK (104 aa). Residues 180-181, 205-206, arginine 262, glycine 284, and glutamine 293 each bind ATP; these read ML and YY.

The protein belongs to the ThiI family.

The protein localises to the cytoplasm. The catalysed reaction is [ThiI sulfur-carrier protein]-S-sulfanyl-L-cysteine + a uridine in tRNA + 2 reduced [2Fe-2S]-[ferredoxin] + ATP + H(+) = [ThiI sulfur-carrier protein]-L-cysteine + a 4-thiouridine in tRNA + 2 oxidized [2Fe-2S]-[ferredoxin] + AMP + diphosphate. It carries out the reaction [ThiS sulfur-carrier protein]-C-terminal Gly-Gly-AMP + S-sulfanyl-L-cysteinyl-[cysteine desulfurase] + AH2 = [ThiS sulfur-carrier protein]-C-terminal-Gly-aminoethanethioate + L-cysteinyl-[cysteine desulfurase] + A + AMP + 2 H(+). The protein operates within cofactor biosynthesis; thiamine diphosphate biosynthesis. Functionally, catalyzes the ATP-dependent transfer of a sulfur to tRNA to produce 4-thiouridine in position 8 of tRNAs, which functions as a near-UV photosensor. Also catalyzes the transfer of sulfur to the sulfur carrier protein ThiS, forming ThiS-thiocarboxylate. This is a step in the synthesis of thiazole, in the thiamine biosynthesis pathway. The sulfur is donated as persulfide by IscS. This Clostridium perfringens (strain SM101 / Type A) protein is Probable tRNA sulfurtransferase.